A 206-amino-acid chain; its full sequence is SOSS complex subunit B2 (206 aa).

Positions 26–89 form a DNA-binding region, OB; the sequence is IVLEIGRVTK…SMWKGCLTLY (64 aa). Disordered stretches follow at residues 114-146 and 166-206; these read EPNP…GTGT and SYAG…AFKR. A compositionally biased stretch (polar residues) spans 181–196; the sequence is LPGTANNQTVMTTISN.

It belongs to the SOSS-B family. SOSS-B2 subfamily. In terms of assembly, component of the SOSS complex, composed of SOSS-B (SOSS-B1/NABP2 or SOSS-B2/NABP1), SOSS-A/INTS3 and SOSS-C/INIP. SOSS complexes containing SOSS-B1/NABP2 are more abundant than complexes containing SOSS-B2/NABP1.

The protein resides in the nucleus. Functionally, component of the SOSS complex, a multiprotein complex that functions downstream of the MRN complex to promote DNA repair and G2/M checkpoint. In the SOSS complex, acts as a sensor of single-stranded DNA that binds to single-stranded DNA, in particular to polypyrimidines. The SOSS complex associates with DNA lesions and influences diverse endpoints in the cellular DNA damage response including cell-cycle checkpoint activation, recombinational repair and maintenance of genomic stability. Required for efficient homologous recombination-dependent repair of double-strand breaks (DSBs) and ATM-dependent signaling pathways. This chain is SOSS complex subunit B2 (NABP1), found in Bos taurus (Bovine).